Here is a 949-residue protein sequence, read N- to C-terminus: UvrABC system protein A (949 aa).

Gly42 to Ser49 is an ATP binding site. The C4-type zinc-finger motif lies at Cys262–Cys289. ABC transporter domains lie at Trp319–Val596 and Val616–Lys945. Gly649–Ser656 is a binding site for ATP. The C4-type zinc-finger motif lies at Cys748–Cys774.

Belongs to the ABC transporter superfamily. UvrA family. In terms of assembly, forms a heterotetramer with UvrB during the search for lesions.

It localises to the cytoplasm. The UvrABC repair system catalyzes the recognition and processing of DNA lesions. UvrA is an ATPase and a DNA-binding protein. A damage recognition complex composed of 2 UvrA and 2 UvrB subunits scans DNA for abnormalities. When the presence of a lesion has been verified by UvrB, the UvrA molecules dissociate. In Neisseria meningitidis serogroup B (strain ATCC BAA-335 / MC58), this protein is UvrABC system protein A.